We begin with the raw amino-acid sequence, 448 residues long: Signal recognition particle 54 kDa protein (448 aa).

GTP-binding positions include 107–114 (GIQGSGKT), 189–193 (DSAGR), and 247–250 (TKLD).

The protein belongs to the GTP-binding SRP family. SRP54 subfamily. In terms of assembly, part of the signal recognition particle protein translocation system, which is composed of SRP and FtsY. Archaeal SRP consists of a 7S RNA molecule of 300 nucleotides and two protein subunits: SRP54 and SRP19.

The protein localises to the cytoplasm. The enzyme catalyses GTP + H2O = GDP + phosphate + H(+). Functionally, involved in targeting and insertion of nascent membrane proteins into the cytoplasmic membrane. Binds to the hydrophobic signal sequence of the ribosome-nascent chain (RNC) as it emerges from the ribosomes. The SRP-RNC complex is then targeted to the cytoplasmic membrane where it interacts with the SRP receptor FtsY. In Thermococcus kodakarensis (strain ATCC BAA-918 / JCM 12380 / KOD1) (Pyrococcus kodakaraensis (strain KOD1)), this protein is Signal recognition particle 54 kDa protein.